The chain runs to 610 residues: MLDFLGTKQRTHTCGELRAAHAGETITIMGWVNRRRDHGNLIFLDLRDRYGITQVVLDKDLSAEAHAKAEQARPEYVICATGKVRARSQEAINPKMPTGEIEIAATELLILNDSKVPPFSPAEEAIANEEVRLKYRYLDLRRPEMQHNFEVRHKVALAVRQYLSGQGFFEVETPFMTRSTPEGARDYLVPSRVHPGEFYALPQSPQLFKQILMISGMDRYFQIARCFRDEDLRADRQPEFTQIDLEMTFPQQETIFGVVEGFLAAAFEAVGQQITVPFPRMTYDKAIELYGIDKPDLRLPPMTDVRSVFSDEELQSLKIEPGMPIVAIVIPNKSAMSNTQKKAFGKEVEEQVGAELAYLDVERLRTSPQFALLADRIDAAAAAHCKLERVEPDHRLVVISPRLGAAAVSRDTSWVYKRAGQLRLELGKRFAAEHKAFEKKGTAADYQFLWVTDFPFFEWDEQSHTWTFAHHPFTSPHQDDLIAGRLESDQAAVRALAYDVVLNGTELGSGSIRIHRQDVQQQIFRALGMSDDEAKERFGFFLEALQYGTPPHGGIALGLDRIVMILAGASSLREVIAFPKTAKAIDLMVDAPTPVSDAQLRELHIRPTKQ.

Glu-182 is a binding site for L-aspartate. Residues 206 to 209 (QLFK) are aspartate. Arg-228 is an L-aspartate binding site. Residues 228–230 (RDE) and Gln-237 each bind ATP. His-470 contacts L-aspartate. Glu-506 is a binding site for ATP. Position 513 (Arg-513) interacts with L-aspartate. Position 558-561 (558-561 (GLDR)) interacts with ATP.

Belongs to the class-II aminoacyl-tRNA synthetase family. Type 1 subfamily. In terms of assembly, homodimer.

Its subcellular location is the cytoplasm. It catalyses the reaction tRNA(Asx) + L-aspartate + ATP = L-aspartyl-tRNA(Asx) + AMP + diphosphate. In terms of biological role, aspartyl-tRNA synthetase with relaxed tRNA specificity since it is able to aspartylate not only its cognate tRNA(Asp) but also tRNA(Asn). Reaction proceeds in two steps: L-aspartate is first activated by ATP to form Asp-AMP and then transferred to the acceptor end of tRNA(Asp/Asn). The chain is Aspartate--tRNA(Asp/Asn) ligase from Acidobacterium capsulatum (strain ATCC 51196 / DSM 11244 / BCRC 80197 / JCM 7670 / NBRC 15755 / NCIMB 13165 / 161).